Consider the following 343-residue polypeptide: Methionine import ATP-binding protein MetN (343 aa).

The 240-residue stretch at 2–241 folds into the ABC transporter domain; it reads IKLSNITKVF…PKTPLAQKFI (240 aa). 38–45 lines the ATP pocket; sequence GASGAGKS.

Belongs to the ABC transporter superfamily. Methionine importer (TC 3.A.1.24) family. As to quaternary structure, the complex is composed of two ATP-binding proteins (MetN), two transmembrane proteins (MetI) and a solute-binding protein (MetQ).

It is found in the cell inner membrane. The enzyme catalyses L-methionine(out) + ATP + H2O = L-methionine(in) + ADP + phosphate + H(+). It catalyses the reaction D-methionine(out) + ATP + H2O = D-methionine(in) + ADP + phosphate + H(+). In terms of biological role, part of the ABC transporter complex MetNIQ involved in methionine import. Responsible for energy coupling to the transport system. This is Methionine import ATP-binding protein MetN from Escherichia coli O157:H7.